Here is a 454-residue protein sequence, read N- to C-terminus: Bifunctional protein GlmU (454 aa).

Residues 1–231 are pyrophosphorylase; the sequence is MDRATVSLIV…EAETLGVNTR (231 aa). Residues 11 to 14, Lys-25, Gln-78, 83 to 84, 106 to 108, Gly-143, Glu-157, Asn-172, and Asn-229 each bind UDP-N-acetyl-alpha-D-glucosamine; these read LAAG, GT, and YGD. Residue Asp-108 coordinates Mg(2+). Asn-229 is a binding site for Mg(2+). The segment at 232–252 is linker; sequence AQLAEAEAEFQKRARAAALED. Residues 253–454 are N-acetyltransferase; sequence GVTLTAPDTV…AKAAKKKEAP (202 aa). Residues Arg-318 and Lys-336 each contribute to the UDP-N-acetyl-alpha-D-glucosamine site. The active-site Proton acceptor is His-348. Residues Tyr-351 and Asn-362 each coordinate UDP-N-acetyl-alpha-D-glucosamine. Acetyl-CoA contacts are provided by residues Ala-365, 371 to 372, Ser-390, Ser-408, and Arg-425; that span reads NY.

In the N-terminal section; belongs to the N-acetylglucosamine-1-phosphate uridyltransferase family. It in the C-terminal section; belongs to the transferase hexapeptide repeat family. Homotrimer. It depends on Mg(2+) as a cofactor.

The protein resides in the cytoplasm. The enzyme catalyses alpha-D-glucosamine 1-phosphate + acetyl-CoA = N-acetyl-alpha-D-glucosamine 1-phosphate + CoA + H(+). It catalyses the reaction N-acetyl-alpha-D-glucosamine 1-phosphate + UTP + H(+) = UDP-N-acetyl-alpha-D-glucosamine + diphosphate. It participates in nucleotide-sugar biosynthesis; UDP-N-acetyl-alpha-D-glucosamine biosynthesis; N-acetyl-alpha-D-glucosamine 1-phosphate from alpha-D-glucosamine 6-phosphate (route II): step 2/2. The protein operates within nucleotide-sugar biosynthesis; UDP-N-acetyl-alpha-D-glucosamine biosynthesis; UDP-N-acetyl-alpha-D-glucosamine from N-acetyl-alpha-D-glucosamine 1-phosphate: step 1/1. Its pathway is bacterial outer membrane biogenesis; LPS lipid A biosynthesis. Functionally, catalyzes the last two sequential reactions in the de novo biosynthetic pathway for UDP-N-acetylglucosamine (UDP-GlcNAc). The C-terminal domain catalyzes the transfer of acetyl group from acetyl coenzyme A to glucosamine-1-phosphate (GlcN-1-P) to produce N-acetylglucosamine-1-phosphate (GlcNAc-1-P), which is converted into UDP-GlcNAc by the transfer of uridine 5-monophosphate (from uridine 5-triphosphate), a reaction catalyzed by the N-terminal domain. In Cereibacter sphaeroides (strain ATCC 17023 / DSM 158 / JCM 6121 / CCUG 31486 / LMG 2827 / NBRC 12203 / NCIMB 8253 / ATH 2.4.1.) (Rhodobacter sphaeroides), this protein is Bifunctional protein GlmU.